Consider the following 352-residue polypeptide: Protein RecA (352 aa).

64–71 is a binding site for ATP; that stretch reads GPESSGKT. The tract at residues 328–352 is disordered; sequence NPSSVPEAEAEHDPEQDEEPTFDLE. The segment covering 335 to 352 has biased composition (acidic residues); it reads AEAEHDPEQDEEPTFDLE.

This sequence belongs to the RecA family.

The protein resides in the cytoplasm. Its function is as follows. Can catalyze the hydrolysis of ATP in the presence of single-stranded DNA, the ATP-dependent uptake of single-stranded DNA by duplex DNA, and the ATP-dependent hybridization of homologous single-stranded DNAs. It interacts with LexA causing its activation and leading to its autocatalytic cleavage. The chain is Protein RecA from Brevibacillus brevis (strain 47 / JCM 6285 / NBRC 100599).